Reading from the N-terminus, the 639-residue chain is tRNA uridine 5-carboxymethylaminomethyl modification enzyme MnmG (639 aa).

FAD contacts are provided by residues 13–18 (GGGHAG), Val125, and Ser180. An NAD(+)-binding site is contributed by 273-287 (GPRYCPSIEDKVVRF). Position 370 (Gln370) interacts with FAD. The segment at 620–639 (KRQGGNGPQSPRPDDGRARA) is disordered.

The protein belongs to the MnmG family. In terms of assembly, homodimer. Heterotetramer of two MnmE and two MnmG subunits. The cofactor is FAD.

It localises to the cytoplasm. NAD-binding protein involved in the addition of a carboxymethylaminomethyl (cmnm) group at the wobble position (U34) of certain tRNAs, forming tRNA-cmnm(5)s(2)U34. The polypeptide is tRNA uridine 5-carboxymethylaminomethyl modification enzyme MnmG (Thioalkalivibrio sulfidiphilus (strain HL-EbGR7)).